The primary structure comprises 276 residues: Putative ankyrin repeat protein R838 (276 aa).

ANK repeat units follow at residues 134–163 (DGDN…DPRS), 164–193 (DYDY…DISS), 195–223 (NHWP…DVRA), and 225–253 (NYNP…EIGS). Positions 254–276 (VSDDDTYDSDSSDYSEDDSESIN) are disordered. The span at 255–276 (SDDDTYDSDSSDYSEDDSESIN) shows a compositional bias: acidic residues.

In Acanthamoeba polyphaga (Amoeba), this protein is Putative ankyrin repeat protein R838.